The primary structure comprises 352 residues: Minor capsid protein VP2 (352 aa).

Gly-2 carries the N-myristoyl glycine; by host lipid modification. Residues 273 to 308 (SGEFIEKFEAPGGANQRTAPQWMLPLLLGLYGSVTS) form a D1 region. Residues 290 to 310 (TAPQWMLPLLLGLYGSVTSAL) traverse the membrane as a helical segment. The interval 313–352 (YEDGPNKKKRKLSRGSSQKTKGTSASAKARHKRRNRSSRS) is disordered. Positions 313 to 352 (YEDGPNKKKRKLSRGSSQKTKGTSASAKARHKRRNRSSRS) are DNA-binding. Positions 316-324 (GPNKKKRKL) match the Nuclear localization signal motif. Over residues 326-338 (RGSSQKTKGTSAS) the composition is skewed to polar residues. Residues 340–352 (KARHKRRNRSSRS) show a composition bias toward basic residues.

Belongs to the polyomaviruses capsid protein VP2 family. In terms of assembly, forms homooligomers, and heterooligomers with VP3 in the endoplasmic reticulum membrane. Interacts (via D1 domain) with VP1. Interacts (via D1 domain) with VP1. Interacts (via C-terminus) with host SP1, this is probably also the case for VP2; this interaction represses SP1 activation of the SV40 early promoter and participates in virion assembly. Interacts (via nuclear localization signal) with host importin alpha2-beta heterodimer. As to quaternary structure, oligomerizes with VP3 in the nucleus.

It is found in the virion. The protein resides in the host nucleus. The protein localises to the host endoplasmic reticulum. It localises to the host endoplasmic reticulum membrane. In terms of biological role, structural protein that resides within the core of the capsid surrounded by 72 VP1 pentamers. Following virus endocytosis and trafficking to the endoplasmic reticulum, VP2 and VP3 form oligomers and integrate into the endoplasmic reticulum membrane. Heterooligomer VP2-VP3 may create a viroporin for transporting the viral genome across the endoplasmic reticulum membrane to the cytoplasm. Nuclear entry of the viral DNA involves the selective exposure and importin recognition of VP2 or VP3 nuclear localization signal (shared C-terminus). Plays a role in virion assembly within the nucleus in particular through a DNA-binding domain located in the C-terminal region. An N-terminal myristoylation suggests a scaffold function for virion assembly. The viral progenies exit the cells by lytic release. Isoform VP2 may repress SP1 activation of the SV40 early promoter, via specific protein-protein and protein-DNA interactions. Structural protein that resides within the core of the capsid surrounded by 72 VP1 pentamers. Following virus entry, VP2 and VP3 form oligomers and integrate into the endoplasmic reticulum membrane. Heterooligomer VP2-VP3 may create a viroporin for transporting the viral genome across the endoplasmic reticulum membrane. Essential for focus formation and virus endoplasmic reticulum-to-cytosol membrane transport, required to recruit selective cellular components to the foci in the ER membrane. Nuclear entry of the viral DNA involves the selective exposure and importin recognition of VP2 or VP3 nuclear localization signal (shared C-terminus). Isoform VP3 represses SP1 activation of the SV40 early promoter, via specific protein-protein and protein-DNA interactions. SP1 additionally participates in recruiting VP3 to the SV40 minichromosome during SV40 assembly. Plays a role in virion assembly within the nucleus. May initiate host cell lysis when associated with VP4. Functionally, viroporin inducing perforation of cellular membranes to trigger virus progeny release. Forms pores of 3 nm inner diameter. VP4 is expressed about 24 hours after the late structural proteins and is not incorporated into the mature virion. This Simian virus 40 (SV40) protein is Minor capsid protein VP2.